Consider the following 599-residue polypeptide: Transcription factor COE4 (599 aa).

Residues 64–67 form an interaction with DNA region; that stretch reads RKSN. The C5-type zinc-finger motif lies at 152–171; that stretch reads CRVLLTHEIMCSRCCDRKSC. Interaction with DNA stretches follow at residues 198–205 and 237–240; these read NCLKNAGN and NNSK. The 84-residue stretch at 256–339 folds into the IPT/TIG domain; sequence PCIKAISPGE…KGAPGRFVYT (84 aa). Disordered stretches follow at residues 449-473 and 556-586; these read GYAR…SSYG and VLRP…TDKF. Residues 464–473 are compositionally biased toward low complexity; sequence SPGSQQSSYG.

This sequence belongs to the COE family. As to quaternary structure, forms either a homodimer or a heterodimer with a related family member. Expressed in the olfactory epithelium, including in both neuronal and basal cell layers. Absent in the vomeronasal organ. Absent from NK cells and CD8(+) T cells.

The protein resides in the nucleus. Its function is as follows. Transcription factor. Positively modulates transcription, perhaps less strongly than other early B cell factor/EBF family proteins. Binds an EBF1/Olf-1 consensus site in vitro. The sequence is that of Transcription factor COE4 (Ebf4) from Mus musculus (Mouse).